Reading from the N-terminus, the 440-residue chain is Fibulin-7 (440 aa).

An N-terminal signal peptide occupies residues 1 to 24 (MGPGSQRALFLLLLLLASPGARAF). The stretch at 28-73 (LNKQQLLTTIRQLQQLLKGQETRFTEGIRNMKSRLAALQNTVNKMT) forms a coiled coil. The Sushi domain maps to 79–136 (VSCPALEAPPDGKKFGSKYLVDHEVYFTCNPGFQLVGPSSVVCLANGSWTGEQPRCRD). Cystine bridges form between Cys-81/Cys-121, Cys-107/Cys-134, Cys-140/Cys-151, Cys-145/Cys-160, Cys-162/Cys-171, Cys-229/Cys-245, Cys-241/Cys-254, Cys-256/Cys-269, Cys-275/Cys-288, Cys-282/Cys-297, and Cys-302/Cys-319. An N-linked (GlcNAc...) asparagine glycan is attached at Asn-124. In terms of domain architecture, EGF-like 1; calcium-binding spans 136-172 (DISECSSQPCHNGGTCVEGINHYRCICPPGKTGNRCQ). An EGF-like 2; calcium-binding domain is found at 225 to 270 (DVNECEIYGQKGRPRLCMHACVNTPGSYRCTCPSGYRILADGKSCE). The EGF-like 3; calcium-binding domain maps to 271 to 320 (DVDECAGPQHMCPRGTTCINTGGGFQCVNPECPEGSGNISYVKTSPFQCE). An N-linked (GlcNAc...) asparagine glycan is attached at Asn-308.

It belongs to the fibulin family. As to quaternary structure, interacts with heparin, FBLN1, FN1 and DSPP. Preferentially binds dental mesenchyme cells and odontoblasts but not dental epithelial cells or nondental cells. Binding requires a heparan sulfate-containing receptor on the cell surface as well as an integrin. In terms of processing, N-glycosylated. Highly expressed in newborn incisors and molars. A weaker expression is seen in the brain, kidneys, muscles and bones.

The protein resides in the secreted. The protein localises to the extracellular space. It localises to the extracellular matrix. In terms of biological role, an adhesion molecule that interacts with extracellular matrix molecules in developing teeth and may play important roles in differentiation and maintenance of odontoblasts as well as in dentin formation. This chain is Fibulin-7 (Fbln7), found in Mus musculus (Mouse).